The following is a 533-amino-acid chain: MTLTQQDASTVEKLDETLHEDRILILDFGSQVTQLIARRVRESGVYCEIWPFTATEEKIRAFNPRGIILSGSPASVHDENAPPIPNVVFALNRPVLGICYGQQAMCQMLGGKVESHEHREFGRAYIDIAEDCSLFRGVWARGKREQVWMSHGDRVTQLPPGFRAVAHSEGAPFAIIADEGRRLYGVQFHPEVVHTPHGAALIRNFTHNVAGCSGTWTMAGFRELEIARIRKQVGSGRVICGLSGGVDSSVAAKLIHDAIGDQLTCIFVDPGIMRTGEADEVVKTFRGRFNIRLVHRDASELFLKELAGVTDPETKRKTIGRLFIEVFEEEAAKLGGAQFLAQGTLYPDVIESVSFSGGPSVTIKSHHNVGGLPDRMNMELVEPLRELFKDEVRMLGRELGIPESIVGRHPFPGPGLAIRIPGDVTKEKLDLLRKVDAIYLEEIRRAGLYDAIWQAFAVLLPVRTVGVMGDGRTYDQACALRAVTSTDGMTAEVYPFDFAFLNRVAGRIVNEVRGINRVTYDITSKPPGTIEWE.

A Glutamine amidotransferase type-1 domain is found at 22–215 (RILILDFGSQ…THNVAGCSGT (194 aa)). C99 acts as the Nucleophile in catalysis. Residues H189 and E191 contribute to the active site. One can recognise a GMPS ATP-PPase domain in the interval 216 to 408 (WTMAGFRELE…LGIPESIVGR (193 aa)). 243–249 (SGGVDSS) contributes to the ATP binding site.

In terms of assembly, homodimer.

It catalyses the reaction XMP + L-glutamine + ATP + H2O = GMP + L-glutamate + AMP + diphosphate + 2 H(+). It functions in the pathway purine metabolism; GMP biosynthesis; GMP from XMP (L-Gln route): step 1/1. Catalyzes the synthesis of GMP from XMP. The polypeptide is GMP synthase [glutamine-hydrolyzing] (Gluconobacter oxydans (strain 621H) (Gluconobacter suboxydans)).